We begin with the raw amino-acid sequence, 486 residues long: UDP-N-acetylmuramate--L-alanine ligase (486 aa).

129-135 is an ATP binding site; it reads GTHGKTT.

The protein belongs to the MurCDEF family.

It localises to the cytoplasm. It catalyses the reaction UDP-N-acetyl-alpha-D-muramate + L-alanine + ATP = UDP-N-acetyl-alpha-D-muramoyl-L-alanine + ADP + phosphate + H(+). It participates in cell wall biogenesis; peptidoglycan biosynthesis. Functionally, cell wall formation. This is UDP-N-acetylmuramate--L-alanine ligase from Vibrio cholerae serotype O1 (strain ATCC 39315 / El Tor Inaba N16961).